The following is a 183-amino-acid chain: Crossover junction endodeoxyribonuclease RuvC (183 aa).

Active-site residues include D7, E66, and D138. 3 residues coordinate Mg(2+): D7, E66, and D138.

This sequence belongs to the RuvC family. In terms of assembly, homodimer which binds Holliday junction (HJ) DNA. The HJ becomes 2-fold symmetrical on binding to RuvC with unstacked arms; it has a different conformation from HJ DNA in complex with RuvA. In the full resolvosome a probable DNA-RuvA(4)-RuvB(12)-RuvC(2) complex forms which resolves the HJ. It depends on Mg(2+) as a cofactor.

It is found in the cytoplasm. The catalysed reaction is Endonucleolytic cleavage at a junction such as a reciprocal single-stranded crossover between two homologous DNA duplexes (Holliday junction).. The RuvA-RuvB-RuvC complex processes Holliday junction (HJ) DNA during genetic recombination and DNA repair. Endonuclease that resolves HJ intermediates. Cleaves cruciform DNA by making single-stranded nicks across the HJ at symmetrical positions within the homologous arms, yielding a 5'-phosphate and a 3'-hydroxyl group; requires a central core of homology in the junction. The consensus cleavage sequence is 5'-(A/T)TT(C/G)-3'. Cleavage occurs on the 3'-side of the TT dinucleotide at the point of strand exchange. HJ branch migration catalyzed by RuvA-RuvB allows RuvC to scan DNA until it finds its consensus sequence, where it cleaves and resolves the cruciform DNA. The polypeptide is Crossover junction endodeoxyribonuclease RuvC (Burkholderia ambifaria (strain ATCC BAA-244 / DSM 16087 / CCUG 44356 / LMG 19182 / AMMD) (Burkholderia cepacia (strain AMMD))).